The chain runs to 152 residues: Urease accessory protein UreE (152 aa).

This sequence belongs to the UreE family.

The protein localises to the cytoplasm. Involved in urease metallocenter assembly. Binds nickel. Probably functions as a nickel donor during metallocenter assembly. This is Urease accessory protein UreE from Psychromonas ingrahamii (strain DSM 17664 / CCUG 51855 / 37).